A 529-amino-acid polypeptide reads, in one-letter code: Bifunctional purine biosynthesis protein PurH (529 aa).

An MGS-like domain is found at Gln2–Val148.

Belongs to the PurH family.

The enzyme catalyses (6R)-10-formyltetrahydrofolate + 5-amino-1-(5-phospho-beta-D-ribosyl)imidazole-4-carboxamide = 5-formamido-1-(5-phospho-D-ribosyl)imidazole-4-carboxamide + (6S)-5,6,7,8-tetrahydrofolate. It catalyses the reaction IMP + H2O = 5-formamido-1-(5-phospho-D-ribosyl)imidazole-4-carboxamide. Its pathway is purine metabolism; IMP biosynthesis via de novo pathway; 5-formamido-1-(5-phospho-D-ribosyl)imidazole-4-carboxamide from 5-amino-1-(5-phospho-D-ribosyl)imidazole-4-carboxamide (10-formyl THF route): step 1/1. It participates in purine metabolism; IMP biosynthesis via de novo pathway; IMP from 5-formamido-1-(5-phospho-D-ribosyl)imidazole-4-carboxamide: step 1/1. The polypeptide is Bifunctional purine biosynthesis protein PurH (Photorhabdus laumondii subsp. laumondii (strain DSM 15139 / CIP 105565 / TT01) (Photorhabdus luminescens subsp. laumondii)).